A 334-amino-acid polypeptide reads, in one-letter code: Glucan endo-1,3-beta-glucosidase GII (334 aa).

Positions 1–28 (MARKDVASMFAAALFIGAFAAVPTSVQS) are cleaved as a signal peptide. The Proton donor role is filled by Glu-122. Catalysis depends on Glu-259, which acts as the Nucleophile.

Belongs to the glycosyl hydrolase 17 family.

The enzyme catalyses Hydrolysis of (1-&gt;3)-beta-D-glucosidic linkages in (1-&gt;3)-beta-D-glucans.. Functionally, may provide a degree of protection against microbial invasion of germinated barley grain through its ability to degrade fungal cell wall polysaccharides. Hydrolyzes laminarin in vitro. The protein is Glucan endo-1,3-beta-glucosidase GII of Hordeum vulgare (Barley).